Here is a 545-residue protein sequence, read N- to C-terminus: Lysine--tRNA ligase (545 aa).

The 'HIGH' region signature appears at 33–41; it reads VSGLQHIGR. Residues 288 to 292 carry the 'KMSKS' region motif; the sequence is DMSSS.

It belongs to the class-I aminoacyl-tRNA synthetase family.

It localises to the cytoplasm. It catalyses the reaction tRNA(Lys) + L-lysine + ATP = L-lysyl-tRNA(Lys) + AMP + diphosphate. The protein is Lysine--tRNA ligase (lysS) of Aeropyrum pernix (strain ATCC 700893 / DSM 11879 / JCM 9820 / NBRC 100138 / K1).